The following is a 348-amino-acid chain: [LysW]-L-2-aminoadipate 6-phosphate reductase (348 aa).

14–17 (SGYA) lines the NADP(+) pocket. Cys151 is an active-site residue. Asn315 contacts NADP(+).

This sequence belongs to the NAGSA dehydrogenase family. Type 1 subfamily. LysY sub-subfamily.

It localises to the cytoplasm. It carries out the reaction [amino-group carrier protein]-C-terminal-N-(1-carboxy-5-oxopentan-1-yl)-L-glutamine + phosphate + NADP(+) = [amino-group carrier protein]-C-terminal-N-(1-carboxy-5-phosphooxy-5-oxopentan-1-yl)-L-glutamine + NADPH + H(+). Its pathway is amino-acid biosynthesis; L-lysine biosynthesis via AAA pathway; L-lysine from L-alpha-aminoadipate (Thermus route): step 3/5. Its function is as follows. Catalyzes the NADPH-dependent reduction of [LysW]-aminoadipate 6-phosphate to yield [LysW]-aminoadipate 6-semialdehyde. The sequence is that of [LysW]-L-2-aminoadipate 6-phosphate reductase from Deinococcus radiodurans (strain ATCC 13939 / DSM 20539 / JCM 16871 / CCUG 27074 / LMG 4051 / NBRC 15346 / NCIMB 9279 / VKM B-1422 / R1).